Consider the following 249-residue polypeptide: Putative S-adenosyl-L-methionine-dependent methyltransferase Mkms_0592 (249 aa).

S-adenosyl-L-methionine is bound by residues Asp111 and 141–142; that span reads DL.

The protein belongs to the UPF0677 family.

Functionally, exhibits S-adenosyl-L-methionine-dependent methyltransferase activity. In Mycobacterium sp. (strain KMS), this protein is Putative S-adenosyl-L-methionine-dependent methyltransferase Mkms_0592.